A 121-amino-acid chain; its full sequence is MARIAGVDIPNDKRVVISLTYVYGIGLATSKKILAAAGVSEDIRVKDLTNDQEDAIRREVDAIKVEGDLRREVNLNIKRLMEIGSYRGIRHRRGLPVRGQNTKNNARTRKGKAVAIAGKKK.

The disordered stretch occupies residues 95–121 (LPVRGQNTKNNARTRKGKAVAIAGKKK). Over residues 106–121 (ARTRKGKAVAIAGKKK) the composition is skewed to basic residues.

It belongs to the universal ribosomal protein uS13 family. Part of the 30S ribosomal subunit. Forms a loose heterodimer with protein S19. Forms two bridges to the 50S subunit in the 70S ribosome.

Its function is as follows. Located at the top of the head of the 30S subunit, it contacts several helices of the 16S rRNA. In the 70S ribosome it contacts the 23S rRNA (bridge B1a) and protein L5 of the 50S subunit (bridge B1b), connecting the 2 subunits; these bridges are implicated in subunit movement. Contacts the tRNAs in the A and P-sites. The protein is Small ribosomal subunit protein uS13 of Streptococcus thermophilus (strain CNRZ 1066).